The primary structure comprises 431 residues: Tyrosine--tRNA ligase (431 aa).

Tyr-33 lines the L-tyrosine pocket. The short motif at 38 to 47 (PTADSLHIGS) is the 'HIGH' region element. L-tyrosine-binding residues include Tyr-172 and Gln-176. Residues 234–238 (KFGKS) carry the 'KMSKS' region motif. Lys-237 contributes to the ATP binding site. The region spanning 364–431 (LDIVTVLNEK…KKNYFVIRVV (68 aa)) is the S4 RNA-binding domain.

Belongs to the class-I aminoacyl-tRNA synthetase family. TyrS type 1 subfamily. Homodimer.

The protein localises to the cytoplasm. The enzyme catalyses tRNA(Tyr) + L-tyrosine + ATP = L-tyrosyl-tRNA(Tyr) + AMP + diphosphate + H(+). In terms of biological role, catalyzes the attachment of tyrosine to tRNA(Tyr) in a two-step reaction: tyrosine is first activated by ATP to form Tyr-AMP and then transferred to the acceptor end of tRNA(Tyr). This Flavobacterium johnsoniae (strain ATCC 17061 / DSM 2064 / JCM 8514 / BCRC 14874 / CCUG 350202 / NBRC 14942 / NCIMB 11054 / UW101) (Cytophaga johnsonae) protein is Tyrosine--tRNA ligase.